A 245-amino-acid polypeptide reads, in one-letter code: Ribosomal RNA large subunit methyltransferase E (245 aa).

The S-adenosyl-L-methionine site is built by Gly-83, Trp-85, Asp-111, Asp-127, and Asp-156. The active-site Proton acceptor is Lys-196.

Belongs to the class I-like SAM-binding methyltransferase superfamily. RNA methyltransferase RlmE family.

Its subcellular location is the cytoplasm. The enzyme catalyses uridine(2552) in 23S rRNA + S-adenosyl-L-methionine = 2'-O-methyluridine(2552) in 23S rRNA + S-adenosyl-L-homocysteine + H(+). In terms of biological role, specifically methylates the uridine in position 2552 of 23S rRNA at the 2'-O position of the ribose in the fully assembled 50S ribosomal subunit. The sequence is that of Ribosomal RNA large subunit methyltransferase E from Polaromonas naphthalenivorans (strain CJ2).